Reading from the N-terminus, the 382-residue chain is Nitric oxide reductase FlRd-NAD(+) reductase (382 aa).

The protein belongs to the FAD-dependent oxidoreductase family. It depends on FAD as a cofactor.

Its subcellular location is the cytoplasm. It catalyses the reaction 2 reduced [nitric oxide reductase rubredoxin domain] + NAD(+) + H(+) = 2 oxidized [nitric oxide reductase rubredoxin domain] + NADH. It functions in the pathway nitrogen metabolism; nitric oxide reduction. Its function is as follows. One of at least two accessory proteins for anaerobic nitric oxide (NO) reductase. Reduces the rubredoxin moiety of NO reductase. The polypeptide is Nitric oxide reductase FlRd-NAD(+) reductase (Vibrio vulnificus (strain CMCP6)).